A 509-amino-acid polypeptide reads, in one-letter code: Maturase K (509 aa).

The protein belongs to the intron maturase 2 family. MatK subfamily.

It localises to the plastid. The protein localises to the chloroplast. In terms of biological role, usually encoded in the trnK tRNA gene intron. Probably assists in splicing its own and other chloroplast group II introns. This Thuja occidentalis (Northern white-cedar) protein is Maturase K.